Consider the following 199-residue polypeptide: Imidazole glycerol phosphate synthase subunit HisH 2 (199 aa).

A Glutamine amidotransferase type-1 domain is found at 1 to 199 (MIAVIDVSGN…NNFLSLESTC (199 aa)). Cys-76 functions as the Nucleophile in the catalytic mechanism. Catalysis depends on residues His-177 and Glu-179.

In terms of assembly, heterodimer of HisH and HisF.

The protein localises to the cytoplasm. It catalyses the reaction 5-[(5-phospho-1-deoxy-D-ribulos-1-ylimino)methylamino]-1-(5-phospho-beta-D-ribosyl)imidazole-4-carboxamide + L-glutamine = D-erythro-1-(imidazol-4-yl)glycerol 3-phosphate + 5-amino-1-(5-phospho-beta-D-ribosyl)imidazole-4-carboxamide + L-glutamate + H(+). The enzyme catalyses L-glutamine + H2O = L-glutamate + NH4(+). It participates in amino-acid biosynthesis; L-histidine biosynthesis; L-histidine from 5-phospho-alpha-D-ribose 1-diphosphate: step 5/9. Functionally, IGPS catalyzes the conversion of PRFAR and glutamine to IGP, AICAR and glutamate. The HisH subunit provides the glutamine amidotransferase activity that produces the ammonia necessary to HisF for the synthesis of IGP and AICAR. This Legionella pneumophila subsp. pneumophila (strain Philadelphia 1 / ATCC 33152 / DSM 7513) protein is Imidazole glycerol phosphate synthase subunit HisH 2.